We begin with the raw amino-acid sequence, 348 residues long: MKYSHQLVIGSLAVFVLTACSGSPTQRRQAKDDFEYLETPEFSQWQLPEDAQPQFYPNFDIPSGEFSGGTGRQVDIRPPQQVLELIPGARTERQNGEVTLWLLRAEEADRVWQTAVDMLTQRNIGIREQSENDIETDWVTWVSEDEEVEIGSRYSISRFQANNRHGFKINLIDWREGSEEKPVSATNKERYNAFLTNLVMARYDADLRAEAALKAQELVKRIPISMGSDRSGFPVIIARTPYNVLWQRLPTLLPTMGFELEERNQSQGTVKAKYAAPDDEFWEEIGLQPIDLAPGTYTFLFGDLGNRTSINVTDASGKPVEEELLKSMVPVLAHVADQTKDKKEAKSE.

The signal sequence occupies residues 1–19 (MKYSHQLVIGSLAVFVLTA). Residue cysteine 20 is the site of N-palmitoyl cysteine attachment. Cysteine 20 carries S-diacylglycerol cysteine lipidation.

Belongs to the BamC family. In terms of assembly, part of the Bam complex.

The protein resides in the cell outer membrane. Part of the outer membrane protein assembly complex, which is involved in assembly and insertion of beta-barrel proteins into the outer membrane. The chain is Outer membrane protein assembly factor BamC from Vibrio atlanticus (strain LGP32) (Vibrio splendidus (strain Mel32)).